The following is a 108-amino-acid chain: uncharacterized protein (108 aa).

Gly2 carries the N-myristoyl glycine; by host lipid modification.

This is an uncharacterized protein from Acanthamoeba polyphaga (Amoeba).